A 595-amino-acid polypeptide reads, in one-letter code: DNA primase (595 aa).

Residues 38–62 form a CHC2-type zinc finger; the sequence is CPFHDEKTPSFIVYPTRGHYHCYGC. One can recognise a Toprim domain in the interval 251–331; sequence RRVILVEGQA…GITAIVCRLP (81 aa). Residues glutamate 257, aspartate 302, and aspartate 304 each coordinate Mg(2+). Basic and acidic residues predominate over residues 430–441; the sequence is KGKKVSAKEPSS. The interval 430 to 451 is disordered; it reads KGKKVSAKEPSSESKQTSTEGK.

Belongs to the DnaG primase family. Monomer. Interacts with DnaB. It depends on Zn(2+) as a cofactor. The cofactor is Mg(2+).

The enzyme catalyses ssDNA + n NTP = ssDNA/pppN(pN)n-1 hybrid + (n-1) diphosphate.. Functionally, RNA polymerase that catalyzes the synthesis of short RNA molecules used as primers for DNA polymerase during DNA replication. The chain is DNA primase from Chlamydia trachomatis serovar D (strain ATCC VR-885 / DSM 19411 / UW-3/Cx).